We begin with the raw amino-acid sequence, 119 residues long: Protein RALF-like 22 (119 aa).

A signal peptide spans 1 to 23 (MTNTRAIYAVIAILAIVISAVES). Residues 24–70 (TGDFGDSLDFVRAGSSSLFSGCTGSIAECIAEEEEMEFDSDISRRIL) constitute a propeptide, removed in mature form. Intrachain disulfides connect Cys-88–Cys-98 and Cys-111–Cys-117.

The protein belongs to the plant rapid alkalinization factor (RALF) family. Post-translationally, proteolytically cleaved, probably by S1P, a subtilisin-like serine protease (subtilase).

Its subcellular location is the secreted. Its function is as follows. Cell signaling peptide that may regulate plant stress, growth, and development. Mediates a rapid alkalinization of extracellular space by mediating a transient increase in the cytoplasmic Ca(2+) concentration leading to a calcium-dependent signaling events through a cell surface receptor and a concomitant activation of some intracellular mitogen-activated protein kinases. The polypeptide is Protein RALF-like 22 (RALFL22) (Arabidopsis thaliana (Mouse-ear cress)).